Consider the following 743-residue polypeptide: Ectonucleotide pyrophosphatase/phosphodiesterase C27A7.3 (743 aa).

The Cytoplasmic segment spans residues Met1–Lys23. Residues Ile24–Val44 form a helical; Signal-anchor for type II membrane protein membrane-spanning segment. Topologically, residues Ala45–Trp743 are lumenal. Residues Asp87 and Thr123 each coordinate Zn(2+). Thr123 functions as the Nucleophile in the catalytic mechanism. A glycan (N-linked (GlcNAc...) asparagine) is linked at Asn195. Zn(2+) contacts are provided by Asp243, His247, Asp286, and His287. N-linked (GlcNAc...) asparagine glycosylation is found at Asn293 and Asn320. His383 lines the Zn(2+) pocket. Residues Asn406, Asn434, and Asn536 are each glycosylated (N-linked (GlcNAc...) asparagine). Asp635, Asn637, Asp639, Ile641, and Asp643 together coordinate Ca(2+). N-linked (GlcNAc...) asparagine glycosylation is present at Asn737.

The protein belongs to the nucleotide pyrophosphatase/phosphodiesterase family. Requires Zn(2+) as cofactor. Ca(2+) is required as a cofactor.

The protein resides in the membrane. Its function is as follows. Probable phosphodiesterase. This chain is Ectonucleotide pyrophosphatase/phosphodiesterase C27A7.3, found in Caenorhabditis elegans.